Here is an 85-residue protein sequence, read N- to C-terminus: Neurotoxin beta-KTx 17 (85 aa).

The signal sequence occupies residues 1–20 (MKQYIFFLALIVLVSTFAEA). Residues 21-37 (GKKTEILDKVKKVFSKG) constitute a propeptide that is removed on maturation. Residues 49 to 85 (ELGCPFIEKWCEDHCESKKQVGKCENFDCSCVKLGGK) enclose the BetaSPN-type CS-alpha/beta domain. 3 cysteine pairs are disulfide-bonded: cysteine 52–cysteine 72, cysteine 59–cysteine 77, and cysteine 63–cysteine 79.

Belongs to the long chain scorpion toxin family. Class 2 subfamily. Expressed by the venom gland.

The protein localises to the secreted. In terms of biological role, has a very weak effect to block voltage-gated potassium channel Kv1.1/KCNA1. The polypeptide is Neurotoxin beta-KTx 17 (Lychas mucronatus (Chinese swimming scorpion)).